Reading from the N-terminus, the 30-residue chain is Vitri peptide A (30 aa).

The cyclopeptide (Gly-Asn) cross-link spans 1–30 (GIPCGESCVWIPCITSAIGCSCKSKVCYRN). Intrachain disulfides connect C4-C20, C8-C22, and C13-C27.

Post-translationally, this is a cyclic peptide.

Probably participates in a plant defense mechanism. Has strong cytotoxic activity against human lymphoma U-937 GTB and human myeloma RPMI-8226/s cell lines. The protein is Vitri peptide A of Viola arvensis (European field pansy).